The following is a 411-amino-acid chain: Tyrosine--tRNA ligase (411 aa).

Position 34 (tyrosine 34) interacts with L-tyrosine. Positions 39–48 match the 'HIGH' region motif; the sequence is CTATSLHIGS. L-tyrosine is bound by residues tyrosine 171 and glutamine 175. A 'KMSKS' region motif is present at residues 231 to 235; that stretch reads KMGKT. Lysine 234 is a binding site for ATP. In terms of domain architecture, S4 RNA-binding spans 345–411; that stretch reads ISAYNLFYNA…GKKRHILVKV (67 aa).

Belongs to the class-I aminoacyl-tRNA synthetase family. TyrS type 1 subfamily. As to quaternary structure, homodimer.

Its subcellular location is the cytoplasm. The catalysed reaction is tRNA(Tyr) + L-tyrosine + ATP = L-tyrosyl-tRNA(Tyr) + AMP + diphosphate + H(+). Catalyzes the attachment of tyrosine to tRNA(Tyr) in a two-step reaction: tyrosine is first activated by ATP to form Tyr-AMP and then transferred to the acceptor end of tRNA(Tyr). The chain is Tyrosine--tRNA ligase from Rickettsia prowazekii (strain Madrid E).